A 146-amino-acid polypeptide reads, in one-letter code: uncharacterized protein (146 aa).

A helical membrane pass occupies residues 7 to 27; it reads FVLSITIVLVILIIIAFIWYN.

It belongs to the asfivirus E146L family.

It localises to the host membrane. The protein resides in the virion. This is an uncharacterized protein from Ornithodoros (relapsing fever ticks).